Reading from the N-terminus, the 1170-residue chain is Putative DNA topoisomerase 2, mitochondrial (1170 aa).

ATP is bound by residues asparagine 106, asparagine 135, 163–165 (SSN), 176–183 (GRNGYGAK), and 396–398 (QTK). A Toprim domain is found at 475 to 590 (CTLILTEGDS…SLVHTDGFIQ (116 aa)). Glutamate 481, aspartate 559, and aspartate 561 together coordinate Mg(2+). Residues 722–1157 (IPSLIDGLKP…DWKSVWRSEL (436 aa)) enclose the Topo IIA-type catalytic domain. Residue tyrosine 813 is the O-(5'-phospho-DNA)-tyrosine intermediate of the active site.

Belongs to the type II topoisomerase family. Homodimer. Requires Mg(2+) as cofactor. It depends on Mn(2+) as a cofactor. The cofactor is Ca(2+).

Its subcellular location is the mitochondrion. The catalysed reaction is ATP-dependent breakage, passage and rejoining of double-stranded DNA.. Control of topological states of DNA by transient breakage and subsequent rejoining of DNA strands. Topoisomerase II makes double-strand breaks. This Caenorhabditis elegans protein is Putative DNA topoisomerase 2, mitochondrial.